Consider the following 243-residue polypeptide: R-spondin-2 (243 aa).

Residues 1–23 (MRFCLFSFALIILNCMDYSQCQG) form the signal peptide. Cystine bridges form between cysteine 40/cysteine 46, cysteine 43/cysteine 52, cysteine 55/cysteine 74, cysteine 78/cysteine 93, cysteine 96/cysteine 104, cysteine 101/cysteine 110, cysteine 113/cysteine 124, cysteine 128/cysteine 141, cysteine 145/cysteine 187, cysteine 156/cysteine 163, and cysteine 196/cysteine 203. Residues 90 to 134 (MNRCARCRIENCDSCFSKDFCTKCKVGFYLHRGRCFDECPDGFAP) form an FU repeat. The TSP type-1 domain occupies 144–204 (GCEVGHWSEW…RCKMAMRHCP (61 aa)). Residue asparagine 160 is glycosylated (N-linked (GlcNAc...) asparagine). The span at 204 to 224 (PGGKRTPKAKEKRNKKKRRKL) shows a compositional bias: basic residues. Residues 204 to 243 (PGGKRTPKAKEKRNKKKRRKLIERAQEQHSVFLATDRVNQ) are disordered.

Belongs to the R-spondin family. In terms of assembly, interacts with WNT1. Binds heparin. Interacts with LGR4, LGR5 and LGR6.

The protein localises to the secreted. In terms of biological role, activator of the canonical Wnt signaling pathway by acting as a ligand for LGR4-6 receptors. Upon binding to LGR4-6 (LGR4, LGR5 or LGR6), LGR4-6 associate with phosphorylated LRP6 and frizzled receptors that are activated by extracellular Wnt receptors, triggering the canonical Wnt signaling pathway to increase expression of target genes. Also regulates the canonical Wnt/beta-catenin-dependent pathway and non-canonical Wnt signaling by acting as an inhibitor of ZNRF3, an important regulator of the Wnt signaling pathway. Probably also acts as a ligand for frizzled and LRP receptors. During embryonic development, plays a crucial role in limb specification, amplifying the Wnt signaling pathway independently of LGR4-6 receptors, possibly by acting as a direct antagonistic ligand to RNF43 and ZNRF3, hence governing the number of limbs an embryo should form. The sequence is that of R-spondin-2 (Rspo2) from Mus musculus (Mouse).